We begin with the raw amino-acid sequence, 454 residues long: Noelin-2 (454 aa).

The signal sequence occupies residues 1 to 20; that stretch reads MWPLTVPPPLLLLLCSGLAG. 2 coiled-coil regions span residues 58 to 85 and 136 to 193; these read RDGR…LELR and LEQY…AQKL. N74, N155, N275, N310, N399, and N441 each carry an N-linked (GlcNAc...) asparagine glycan. The Olfactomedin-like domain occupies 194-446; sequence GCGKLTGVSN…QVLYNVTLFH (253 aa). The cysteines at positions 195 and 377 are disulfide-linked.

Peripherally associated with AMPAR complex. AMPAR complex consists of an inner core made of 4 pore-forming GluA/GRIA proteins (GRIA1, GRIA2, GRIA3 and GRIA4) and 4 major auxiliary subunits arranged in a twofold symmetry. One of the two pairs of distinct binding sites is occupied either by CNIH2, CNIH3 or CACNG2, CACNG3. The other harbors CACNG2, CACNG3, CACNG4, CACNG8 or GSG1L. This inner core of AMPAR complex is complemented by outer core constituents binding directly to the GluA/GRIA proteins at sites distinct from the interaction sites of the inner core constituents. Outer core constituents include at least PRRT1, PRRT2, CKAMP44/SHISA9, FRRS1L and NRN1. The proteins of the inner and outer core serve as a platform for other, more peripherally associated AMPAR constituents, including OLFM2. Alone or in combination, these auxiliary subunits control the gating and pharmacology of the AMPAR complex and profoundly impact their biogenesis and protein processing. Interacts with GRIA2. Interacts with OLFM1 and OLFM3. Interacts with SRF; the interaction promotes dissociation of SRF from the transcriptional repressor HEY2. Interacts with RUNX2. Post-translationally, N-glycosylated. As to expression, expressed in aortic smooth muscle (at protein level). In the fetus, expressed in the brain and ocular tissues including lens vesicle and optic cup.

It is found in the secreted. The protein resides in the synapse. It localises to the membrane. The protein localises to the nucleus. Its subcellular location is the cytoplasm. Functionally, involved in transforming growth factor beta (TGF-beta)-induced smooth muscle differentiation. TGF-beta induces expression and translocation of OLFM2 to the nucleus where it binds to SRF, causing its dissociation from the transcriptional repressor HEY2/HERP1 and facilitating binding of SRF to target genes. Plays a role in AMPAR complex organization. Is a regulator of vascular smooth-muscle cell (SMC) phenotypic switching, that acts by promoting RUNX2 and inhibiting MYOCD binding to SRF. SMC phenotypic switching is the process through which vascular SMCs undergo transition between a quiescent contractile phenotype and a proliferative synthetic phenotype in response to pathological stimuli. SMC phenotypic plasticity is essential for vascular development and remodeling. The polypeptide is Noelin-2 (OLFM2) (Homo sapiens (Human)).